A 563-amino-acid polypeptide reads, in one-letter code: Arylsulfatase K (563 aa).

Residues Met-1–Pro-17 form the signal peptide. 2 residues coordinate Ca(2+): Asp-40 and Cys-80. Residue Cys-80 is the Nucleophile of the active site. 3-oxoalanine (Cys) is present on Cys-80. Asn-108 carries N-linked (GlcNAc...) asparagine glycosylation. Lys-128 is a substrate binding site. An N-linked (GlcNAc...) asparagine glycan is attached at Asn-191. His-249 is a substrate binding site. The N-linked (GlcNAc...) asparagine glycan is linked to Asn-260. Asp-311 and His-312 together coordinate Ca(2+). Asn-373, Asn-411, and Asn-496 each carry an N-linked (GlcNAc...) asparagine glycan.

The protein belongs to the sulfatase family. Requires Ca(2+) as cofactor. In terms of processing, the conversion to 3-oxoalanine (also known as C-formylglycine, FGly), of a serine or cysteine residue in prokaryotes and of a cysteine residue in eukaryotes, is critical for catalytic activity. The 75-kDa precursor undergoes proteolytic processing to yield a 23 kDa form. Post-translationally, N-glycosylated with both high mannose and complex type sugars.

The protein localises to the secreted. Its subcellular location is the lysosome. It catalyses the reaction an aryl sulfate + H2O = a phenol + sulfate + H(+). It carries out the reaction Hydrolysis of the 2-sulfate groups of the 2-O-sulfo-D-glucuronate residues of chondroitin sulfate, heparin and heparitin sulfate.. Catalyzes the hydrolysis of pseudosubstrates such as p-nitrocatechol sulfate and p-nitrophenyl sulfate. Catalyzes the hydrolysis of the 2-sulfate groups of the 2-O-sulfo-D-glucuronate residues of chondroitin sulfate, heparin and heparitin sulfate. Acts selectively on 2-sulfoglucuronate and lacks activity against 2-sulfoiduronate. This chain is Arylsulfatase K (Arsk), found in Rattus norvegicus (Rat).